Consider the following 1047-residue polypeptide: Carbamoyl phosphate synthase arginine-specific large chain (1047 aa).

Residues 1–401 (MPKRTDIQSV…GLQKAVRSLE (401 aa)) are carboxyphosphate synthetic domain. 12 residues coordinate ATP: R129, R169, G175, G176, K208, I210, E215, G241, V242, H243, Q284, and E298. Positions 133-327 (RQLMHELHEP…IARMAAKLSL (195 aa)) constitute an ATP-grasp 1 domain. Mg(2+)-binding residues include Q284, E298, and N300. Residues Q284, E298, and N300 each coordinate Mn(2+). An oligomerization domain region spans residues 402-549 (IKTHGLSLPS…YSSWTGENDL (148 aa)). Residues 550 to 933 (LLPEKAKERV…AFRKAFAWGE (384 aa)) form a carbamoyl phosphate synthetic domain region. An ATP-grasp 2 domain is found at 676-865 (YEFMRSVEVP…LITYTIDVLF (190 aa)). ATP is bound by residues R712, A750, E756, G781, V782, H783, S784, Q824, and E836. 3 residues coordinate Mg(2+): Q824, E836, and N838. Mn(2+) contacts are provided by Q824, E836, and N838. The tract at residues 934-1047 (EQTPALFRKK…PFLLPDVVMN (114 aa)) is allosteric domain. The 111-residue stretch at 937–1047 (PALFRKKGSV…PFLLPDVVMN (111 aa)) folds into the MGS-like domain.

It belongs to the CarB family. In terms of assembly, composed of two chains; the small (or glutamine) chain promotes the hydrolysis of glutamine to ammonia, which is used by the large (or ammonia) chain to synthesize carbamoyl phosphate. Tetramer of heterodimers (alpha,beta)4. The cofactor is Mg(2+). Mn(2+) serves as cofactor.

The catalysed reaction is hydrogencarbonate + L-glutamine + 2 ATP + H2O = carbamoyl phosphate + L-glutamate + 2 ADP + phosphate + 2 H(+). It carries out the reaction hydrogencarbonate + NH4(+) + 2 ATP = carbamoyl phosphate + 2 ADP + phosphate + 2 H(+). The protein operates within amino-acid biosynthesis; L-arginine biosynthesis; carbamoyl phosphate from bicarbonate: step 1/1. In terms of biological role, large subunit of the glutamine-dependent carbamoyl phosphate synthetase (CPSase). CPSase catalyzes the formation of carbamoyl phosphate from the ammonia moiety of glutamine, carbonate, and phosphate donated by ATP, constituting the first step of the biosynthetic pathway leading to arginine and/or urea. The large subunit (synthetase) binds the substrates ammonia (free or transferred from glutamine from the small subunit), hydrogencarbonate and ATP and carries out an ATP-coupled ligase reaction, activating hydrogencarbonate by forming carboxy phosphate which reacts with ammonia to form carbamoyl phosphate. The polypeptide is Carbamoyl phosphate synthase arginine-specific large chain (Halalkalibacterium halodurans (strain ATCC BAA-125 / DSM 18197 / FERM 7344 / JCM 9153 / C-125) (Bacillus halodurans)).